The primary structure comprises 127 residues: Large ribosomal subunit protein bL17 (127 aa).

Belongs to the bacterial ribosomal protein bL17 family. Part of the 50S ribosomal subunit. Contacts protein L32.

This is Large ribosomal subunit protein bL17 from Pelobacter propionicus (strain DSM 2379 / NBRC 103807 / OttBd1).